Reading from the N-terminus, the 579-residue chain is Folliculin (579 aa).

A disordered region spans residues 31 to 82; sequence QGAGSGDSPDQVEQAEEEEGGIQMSSRVRAHSPAEGASSESSSPGPKKSDMC. Phosphoserine occurs at positions 62 and 73. A compositionally biased stretch (low complexity) spans 63–76; sequence PAEGASSESSSPGP. Residues 86 to 242 enclose the uDENN FLCN/SMCR8-type domain; sequence RSLAVGHPGY…RNGNAARSLT (157 aa). Residues 287–310 adopt a coiled-coil conformation; sequence EKLADLEEESESWDNSEAEEEEKA. Residues 294–308 show a composition bias toward acidic residues; it reads EESESWDNSEAEEEE. The disordered stretch occupies residues 294–323; it reads EESESWDNSEAEEEEKAPVTPEGAEGRELT. 5 positions are modified to phosphoserine: S302, S406, S537, S542, and S571. The cDENN FLCN/SMCR8-type domain occupies 339-491; sequence QPPKLTGFKS…ILNKIEAALT (153 aa). The dDENN FLCN/SMCR8-type domain occupies 493-558; that stretch reads QNLSVDVVDQ…LLKFWMTGLS (66 aa).

This sequence belongs to the folliculin family. Interacts (via C-terminus) with FNIP1 or FNIP2 (via C-terminus). Component of the lysosomal folliculin complex (LFC), composed of FLCN, FNIP1 (or FNIP2), RagA/RRAGA or RagB/RRAGB GDP-bound, RagC/RRAGC or RagD/RRAGD GTP-bound, and Ragulator. Interaction with FNIP1 or FNIP2 mediates indirect interaction with the PRKAA1, PRKAB1 and PRKAG1 subunits of 5'-AMP-activated protein kinase (AMPK). Interacts with HSP90AA1 in the presence of FNIP1. Interacts with HSP70, STUB1, CDC37, AHSA1, CCT2, STIP1, PTGES3 and PPP5C. Interacts with GABARAP; interaction takes place in the presence of FNIP1 and/or FNIP2. Interacts with RILP; the interaction is direct and promotes association between RILP and RAB34. Interacts with KIF3A and KIF3B. Interacts with lactate dehydrogenase LDHA, but not LDHB; the interaction is direct, may preferentially bind LDHA dimers rather than tetramers, and regulates LDHA activity, acting as an uncompetitive inhibitor. In terms of processing, phosphorylation by ULK1 modulates the interaction with GABARAP and is required to regulate autophagy. In terms of tissue distribution, highly expressed in adult heart, pancreas, and prostate with moderate expression in adult brain, kidney, liver, adipose tissue and lung.

It localises to the lysosome membrane. The protein resides in the cytoplasm. Its subcellular location is the cytosol. The protein localises to the cell projection. It is found in the cilium. It localises to the cytoskeleton. The protein resides in the microtubule organizing center. Its subcellular location is the centrosome. The protein localises to the spindle. It is found in the nucleus. GTPase-activating activity is inhibited in the folliculin complex (LFC), which stabilizes the GDP-bound state of RagA/RRAGA (or RagB/RRAGB), because Arg-164 is located far from the RagC/RRAGC or RagD/RRAGD nucleotide pocket. Disassembly of the LFC complex upon amino acid restimulation liberates the GTPase-activating activity. Multi-functional protein, involved in both the cellular response to amino acid availability and in the regulation of glycolysis. GTPase-activating protein that plays a key role in the cellular response to amino acid availability through regulation of the non-canonical mTORC1 signaling cascade controlling the MiT/TFE factors TFEB and TFE3. Activates mTORC1 by acting as a GTPase-activating protein: specifically stimulates GTP hydrolysis by RagC/RRAGC or RagD/RRAGD, promoting the conversion to the GDP-bound state of RagC/RRAGC or RagD/RRAGD, and thereby activating the kinase activity of mTORC1. The GTPase-activating activity is inhibited during starvation and activated in presence of nutrients. Acts as a key component for non-canonical mTORC1-dependent control of the MiT/TFE factors TFEB and TFE3, while it is not involved in mTORC1-dependent phosphorylation of canonical RPS6KB1/S6K1 and EIF4EBP1/4E-BP1. In low-amino acid conditions, the lysosomal folliculin complex (LFC) is formed on the membrane of lysosomes, which inhibits the GTPase-activating activity of FLCN, inactivates mTORC1 and maximizes nuclear translocation of TFEB and TFE3. Upon amino acid restimulation, RagA/RRAGA (or RagB/RRAGB) nucleotide exchange promotes disassembly of the LFC complex and liberates the GTPase-activating activity of FLCN, leading to activation of mTORC1 and subsequent cytoplasmic retention of TFEB and TFE3. Indirectly acts as a positive regulator of Wnt signaling by promoting mTOR-dependent cytoplasmic retention of MiT/TFE factor TFE3. Required for the exit of hematopoietic stem cell from pluripotency by promoting mTOR-dependent cytoplasmic retention of TFE3, thereby increasing Wnt signaling. Involved in the control of embryonic stem cells differentiation; together with LAMTOR1 it is necessary to recruit and activate RagC/RRAGC and RagD/RRAGD at the lysosomes, and to induce exit of embryonic stem cells from pluripotency via non-canonical, mTOR-independent TFE3 inactivation. Acts as an inhibitor of browning of adipose tissue by regulating mTOR-dependent cytoplasmic retention of TFE3. In response to flow stress, regulates STK11/LKB1 accumulation and mTORC1 activation through primary cilia: may act by recruiting STK11/LKB1 to primary cilia for activation of AMPK resided at basal bodies, causing mTORC1 down-regulation. Together with FNIP1 and/or FNIP2, regulates autophagy: following phosphorylation by ULK1, interacts with GABARAP and promotes autophagy. Required for starvation-induced perinuclear clustering of lysosomes by promoting association of RILP with its effector RAB34. Regulates glycolysis by binding to lactate dehydrogenase LDHA, acting as an uncompetitive inhibitor. This chain is Folliculin, found in Mus musculus (Mouse).